The primary structure comprises 973 residues: MESIADHFFLAGLSNGFVSVSNSQFRADRLDEDAISVSSSIIQNNTRKSPLKRVSITSESSFYKENTFAHHNTTGSNSVGPKKPFLDYHHSTSNTPTKKKKDSFDHASVTSLHRRSLSSNTSTPRKYHSRKPYSEPSVIDKEHLQNRVSIGTTHTQNDLYQSYVAYPDALPLFAATHPFERRYPPSLLHQFPSSKDIKNETPTIDRCDFPNYVPMFAFPNDITIKESDVRPVSTYHSFALTSDNNSHLYGICVVVWVAMPQSMQNDLEKECEVWRANNTTVEDREVAEKLLSSLETERSKLSSLLLKMQEKELEGSDSIDPILLEKIDVCEENIILYTELLRPMRYKLPRFVHGLTNNRTLWIPNAYGLLSKHSHLQSFCRDWLRIVCSSIQAEDLDFIPSSDLNSLKSLNLQSFVKNICCDVPLPPKGLLQLQVNVGPLNLYAFRSPVNEIPGWNDVDLYPLFRALSIPNILVLFEAALMEAKVIFLSENLGMLGYASQALLHLLYPLTWQGLYIPVLPRRLISCFEAPCSYIIGTLSYFFHMDDVPLDNIPLVVCDLDKNSVSTFGKIVRLSRSLRSKLQAHLKLAAPLHDKFYVPHSPPKYTMETYPNNVLSLSTVTCFPLREKFSIPALLSFRSSNFSKRPYVLSPILNGFLKLQDNPSSIYFAKQTDSRQSSASKLLYARLQAPEHARNFSSPPFTRPASPSSSKFRFSSSSFQSTIRRNSLTSPYSVPELRSSESNQNKAGSINTGSAVNLVSSKPGEQKVHIMYKEGHKLRRIYKMFPADSAGSICAVSGYALGDVHVQCDNCGLRVNLDFIKHISMPCVPACFNSQQILVTFLKFFIKILGSYRNYLRKPHMSRENFGISKGSGGLIGSFDFNKFTRQASKVHGSWISSLCSSQAFAEFIGDRCELDLNDPRVALFDQLLLCERNHGKPRLFGKATPFLRDKSLEIQRIEVAPIPASLKNDNALH.

Positions 69–79 are enriched in polar residues; that stretch reads AHHNTTGSNSV. Positions 69-136 are disordered; that stretch reads AHHNTTGSNS…YHSRKPYSEP (68 aa). S134 and S318 each carry phosphoserine. The 259-residue stretch at 169-427 folds into the uDENN domain; the sequence is ALPLFAATHP…NICCDVPLPP (259 aa). Positions 449 to 586 constitute a cDENN domain; the sequence is VNEIPGWNDV…LRSKLQAHLK (138 aa). The 332-residue stretch at 588-919 folds into the dDENN domain; that stretch reads AAPLHDKFYV…DRCELDLNDP (332 aa). Residues 693 to 713 are disordered; that stretch reads RNFSSPPFTRPASPSSSKFRF. S726 is subject to Phosphoserine. The interval 729–750 is disordered; the sequence is SPYSVPELRSSESNQNKAGSIN. Over residues 739-750 the composition is skewed to polar residues; that stretch reads SESNQNKAGSIN.

It is found in the cytoplasm. Its subcellular location is the nucleus. This chain is DENN domain-containing protein C297.05, found in Schizosaccharomyces pombe (strain 972 / ATCC 24843) (Fission yeast).